The chain runs to 153 residues: Natriuretic peptides A (153 aa).

The N-terminal stretch at 1-25 is a signal peptide; it reads MGPFSTITVSFLFCLAFWHPDQIGA. 2 propeptides span residues 26–123 and 93–103; these read NPVY…TAPR and DGEALGRSTWE. The disordered stretch occupies residues 54-101; sequence EDEAVPPQALSEQSDEAGAALSPLPEVPPWTGEVSPAQRDGEALGRST. A Phosphoserine modification is found at serine 129. Cysteines 130 and 146 form a disulfide. The important for degradation of atrial natriuretic peptide by IDE stretch occupies residues 147–151; it reads NSFRY.

It belongs to the natriuretic peptide family. As to quaternary structure, homodimer; disulfide-linked antiparallel dimer. In terms of processing, the precursor molecule is proteolytically cleaved by CORIN at Arg-123 to produce the atrial natriuretic peptide. Undergoes further proteolytic cleavage by unknown proteases to give rise to long-acting natriuretic peptide, vessel dilator and kaliuretic peptide. Additional processing gives rise to the auriculin and atriopeptin peptides. In the kidneys, alternative processing by an unknown protease results in the peptide urodilatin. Cleavage by MME initiates degradation of the factor and thereby regulates its activity. Degradation by IDE results in reduced activation of NPR1 (in vitro). During IDE degradation, the resulting products can temporarily stimulate NPR2 to produce cGMP, before the fragments are completely degraded and inactivated by IDE (in vitro). Post-translationally, degraded by IDE. In terms of processing, phosphorylation on Ser-129 decreases vasorelaxant activity.

It is found in the secreted. The protein localises to the perikaryon. Its subcellular location is the cell projection. Functionally, hormone that plays a key role in mediating cardio-renal homeostasis, and is involved in vascular remodeling and regulating energy metabolism. Acts by specifically binding and stimulating NPR1 to produce cGMP, which in turn activates effector proteins, such as PRKG1, that drive various biological responses. Regulates vasodilation, natriuresis, diuresis and aldosterone synthesis and is therefore essential for regulating blood pressure, controlling the extracellular fluid volume and maintaining the fluid-electrolyte balance. Also involved in inhibiting cardiac remodeling and cardiac hypertrophy by inducing cardiomyocyte apoptosis and attenuating the growth of cardiomyocytes and fibroblasts. Plays a role in female pregnancy by promoting trophoblast invasion and spiral artery remodeling in uterus, and thus prevents pregnancy-induced hypertension. In adipose tissue, acts in various cGMP- and PKG-dependent pathways to regulate lipid metabolism and energy homeostasis. This includes up-regulating lipid metabolism and mitochondrial oxygen utilization by activating the AMP-activated protein kinase (AMPK), and increasing energy expenditure by acting via MAPK11 to promote the UCP1-dependent thermogenesis of brown adipose tissue. Binds the clearance receptor NPR3 which removes the hormone from circulation. In terms of biological role, may have a role in cardio-renal homeostasis through regulation of natriuresis, diuresis, vasodilation, and inhibiting aldosterone synthesis. In vitro, promotes the production of cGMP and induces vasodilation. May promote natriuresis, at least in part, by enhancing prostaglandin E2 synthesis resulting in the inhibition of renal Na+-K+-ATPase. However reports on the involvement of this peptide in mammal blood volume and blood pressure homeostasis are conflicting; according to a report, in vivo it is not sufficient to activate cGMP and does not inhibit collecting duct transport nor effect diuresis and natriuresis. Appears to bind to specific receptors that are distinct from the receptors bound by atrial natriuretic peptide and vessel dilator. Possibly enhances protein excretion in urine by decreasing proximal tubular protein reabsorption. May have a role in cardio-renal homeostasis through regulation of natriuresis, diuresis, and vasodilation. In vitro, promotes the production of cGMP and induces vasodilation. May promote natriuresis, at least in part, by enhancing prostaglandin E2 synthesis resulting in the inhibition of renal Na+-K+-ATPase. However reports on the involvement of this peptide in mammal blood volume and blood pressure homeostasis are conflicting; according to a report it is not sufficient to activate cGMP and does not inhibit collecting duct transport nor effect diuresis and natriuresis. Appears to bind to specific receptors that are distinct from the receptors bound by the atrial natriuretic and long-acting natriuretic peptides. Possibly functions in protein excretion in urine by maintaining the integrity of the proximal tubules and enhancing protein excretion by decreasing proximal tubular protein reabsorption. Its function is as follows. May have a role in cardio-renal homeostasis through regulation of diuresis and inhibiting aldosterone synthesis. In vitro, promotes the production of cGMP and induces vasodilation. May promote natriuresis, at least in part, by enhancing prostaglandin E2 synthesis resulting in the inhibition of renal Na+-K+-ATPase. May have a role in potassium excretion but not sodium excretion (natriuresis). Possibly enhances protein excretion in urine by decreasing proximal tubular protein reabsorption. Functionally, hormone produced in the kidneys that appears to be important for maintaining cardio-renal homeostasis. Mediates vasodilation, natriuresis and diuresis primarily in the renal system, in order to maintain the extracellular fluid volume and control the fluid-electrolyte balance. Specifically binds and stimulates cGMP production by renal transmembrane receptors, likely NPR1. Urodilatin not ANP, may be the natriuretic peptide responsible for the regulation of sodium and water homeostasis in the kidney. In terms of biological role, may have a role in cardio-renal homeostasis through regulation of natriuresis and vasodilation. In vivo promotes natriuresis and in vitro, vasodilates renal artery strips. May have a role in cardio-renal homeostasis through regulation of regulation of natriuresis and vasodilation. In vivo promotes natriuresis. In vitro, vasodilates intestinal smooth muscle but not smooth muscle strips. Its function is as follows. May have a role in cardio-renal homeostasis through regulation of natriuresis and vasodilation. In vivo promotes natriuresis. In vitro, selectively vasodilates intestinal and vascular smooth muscle strips. Functionally, may have a role in cardio-renal homeostasis through regulation of natriuresis and vasodilation. In vivo promotes natriuresis. In vitro, selectively vasodilates intestinal smooth muscle but not vascular smooth muscle strips. The polypeptide is Natriuretic peptides A (NPPA) (Oryctolagus cuniculus (Rabbit)).